The sequence spans 253 residues: UPF0758 protein Bxeno_A3578 (253 aa).

The 123-residue stretch at 131–253 folds into the MPN domain; the sequence is LINSPEAVEN…VYSFARAGWP (123 aa). The Zn(2+) site is built by histidine 202, histidine 204, and aspartate 215. The JAMM motif motif lies at 202–215; sequence HNHPSGAVQPSASD.

The protein belongs to the UPF0758 family.

The polypeptide is UPF0758 protein Bxeno_A3578 (Paraburkholderia xenovorans (strain LB400)).